Consider the following 518-residue polypeptide: GMP synthase [glutamine-hydrolyzing] (518 aa).

Residues 8-201 (TVLIIDFGSQ…VCKISGIKNN (194 aa)) form the Glutamine amidotransferase type-1 domain. The Nucleophile role is filled by Cys-85. Active-site residues include His-175 and Glu-177. The GMPS ATP-PPase domain occupies 202–393 (WSMAAYRDQA…LGLPEEFIKR (192 aa)). Residue 229-235 (SGGVDSS) coordinates ATP.

Homodimer.

The catalysed reaction is XMP + L-glutamine + ATP + H2O = GMP + L-glutamate + AMP + diphosphate + 2 H(+). It participates in purine metabolism; GMP biosynthesis; GMP from XMP (L-Gln route): step 1/1. Catalyzes the synthesis of GMP from XMP. In Bartonella bacilliformis (strain ATCC 35685 / KC583 / Herrer 020/F12,63), this protein is GMP synthase [glutamine-hydrolyzing].